The chain runs to 409 residues: Dihydroorotase (409 aa).

2 residues coordinate Zn(2+): His-57 and His-59. Substrate is bound by residues 59-61 (HLR) and Asn-91. 4 residues coordinate Zn(2+): Lys-139, His-168, His-208, and Asp-276. N6-carboxylysine is present on Lys-139. The active site involves Asp-276. Residues His-280 and 290–291 (AG) each bind substrate.

Belongs to the metallo-dependent hydrolases superfamily. DHOase family. Class I DHOase subfamily. The cofactor is Zn(2+).

The enzyme catalyses (S)-dihydroorotate + H2O = N-carbamoyl-L-aspartate + H(+). The protein operates within pyrimidine metabolism; UMP biosynthesis via de novo pathway; (S)-dihydroorotate from bicarbonate: step 3/3. Functionally, catalyzes the reversible cyclization of carbamoyl aspartate to dihydroorotate. The sequence is that of Dihydroorotase from Thermococcus kodakarensis (strain ATCC BAA-918 / JCM 12380 / KOD1) (Pyrococcus kodakaraensis (strain KOD1)).